Reading from the N-terminus, the 269-residue chain is Indole-3-glycerol phosphate synthase 1 (269 aa).

This sequence belongs to the TrpC family.

The catalysed reaction is 1-(2-carboxyphenylamino)-1-deoxy-D-ribulose 5-phosphate + H(+) = (1S,2R)-1-C-(indol-3-yl)glycerol 3-phosphate + CO2 + H2O. It functions in the pathway amino-acid biosynthesis; L-tryptophan biosynthesis; L-tryptophan from chorismate: step 4/5. This Streptomyces coelicolor (strain ATCC BAA-471 / A3(2) / M145) protein is Indole-3-glycerol phosphate synthase 1 (trpC1).